Consider the following 1659-residue polypeptide: Cortactin-binding protein 2 (1659 aa).

Residues 1-23 (MATDGASCEPDLSRAPEDAAGAA) are disordered. A coiled-coil region spans residues 119–276 (RKMQERMSAQ…EQLKRGSDSK (158 aa)). Disordered regions lie at residues 324 to 436 (LTMP…LHPG) and 450 to 474 (GNAN…SPTS). 2 stretches are compositionally biased toward low complexity: residues 337–348 (ASANAKGSAAMA) and 381–392 (GPSTGLTPDPTS). Over residues 405–418 (TAQTPGITPQNSQA) the composition is skewed to polar residues. Position 494 is an asymmetric dimethylarginine (R494). The interval 495–612 (FTGPQAGAPP…SSPQLPPKPS (118 aa)) is disordered. Residues 579 to 589 (TVASPPSSLPQ) are compositionally biased toward polar residues. ANK repeat units lie at residues 705–735 (GRPT…DINY), 739–768 (DGHS…QVNA), 772–801 (NGFT…NINH), 805–834 (GGQT…DRNV), and 838–867 (DGWT…PAHG). Residues 869–893 (SFSEEESESGVFDLDGGGESPEGKS) form a disordered region. The ANK 6 repeat unit spans residues 908–938 (EGWTAAHIAASKGFKNCLEILCRHGGLETER). Positions 1443 to 1478 (KKKGESGAWRKVNTSPRRKSGRFSLPTWNKPDLSTE) are disordered. A Phosphoserine modification is found at S1520. Residues 1613-1659 (RSKVTQCSQNTKRNSSSSNTRQIEINNNSKEENWNLHKNEHLEKPNK) form a disordered region. The segment covering 1620–1634 (SQNTKRNSSSSNTRQ) has biased composition (low complexity). Residues 1641–1659 (SKEENWNLHKNEHLEKPNK) are compositionally biased toward basic and acidic residues.

As to quaternary structure, interacts with CTTN/cortactin SH3 domain. Interacts with STRN, STRN4/zinedin and MOB4/phocein; this interactions mediate the association with the STRIPAK core complex and may regulate dendritic spine distribution of the STRIPAK complex in hippocampal neurons. Activation of glutamate receptors weakens the interaction with STRN and STRN4.

The protein resides in the cytoplasm. Its subcellular location is the cell cortex. It is found in the cell projection. The protein localises to the dendritic spine. Functionally, regulates the dendritic spine distribution of CTTN/cortactin in hippocampal neurons, and thus controls dendritic spinogenesis and dendritic spine maintenance. Associates with the striatin-interacting phosphatase and kinase (STRIPAK) core complex to regulate dendritic spine distribution of the STRIPAK complex in hippocampal neurons. The sequence is that of Cortactin-binding protein 2 (CTTNBP2) from Saimiri boliviensis boliviensis (Bolivian squirrel monkey).